We begin with the raw amino-acid sequence, 300 residues long: Ribonuclease HIII (300 aa).

The 218-residue stretch at Ile-83–Lys-300 folds into the RNase H type-2 domain. Residues Asp-89, Glu-90, and Asp-194 each coordinate a divalent metal cation.

It belongs to the RNase HII family. RnhC subfamily. Mn(2+) serves as cofactor. Requires Mg(2+) as cofactor.

It is found in the cytoplasm. It carries out the reaction Endonucleolytic cleavage to 5'-phosphomonoester.. Endonuclease that specifically degrades the RNA of RNA-DNA hybrids. The sequence is that of Ribonuclease HIII from Streptococcus pyogenes serotype M5 (strain Manfredo).